The following is a 339-amino-acid chain: tRNA dimethylallyltransferase (339 aa).

36-43 serves as a coordination point for ATP; sequence GPTGSGKT. 38–43 is a binding site for substrate; sequence TGSGKT. Residues 61-64 form an interaction with substrate tRNA region; that stretch reads DSMQ.

It belongs to the IPP transferase family. Monomer. It depends on Mg(2+) as a cofactor.

It catalyses the reaction adenosine(37) in tRNA + dimethylallyl diphosphate = N(6)-dimethylallyladenosine(37) in tRNA + diphosphate. Catalyzes the transfer of a dimethylallyl group onto the adenine at position 37 in tRNAs that read codons beginning with uridine, leading to the formation of N6-(dimethylallyl)adenosine (i(6)A). This chain is tRNA dimethylallyltransferase, found in Chlamydia trachomatis serovar A (strain ATCC VR-571B / DSM 19440 / HAR-13).